Consider the following 306-residue polypeptide: IN2-2 protein (306 aa).

Catalysis depends on Y64, which acts as the Proton donor. A substrate-binding site is contributed by H131. An NADP(+)-binding site is contributed by 210 to 220; sequence SPLGRGFFSSG. The disordered stretch occupies residues 272–306; it reads LGSPPRKRRLPHTWHNKNRQLQPERGGTVCEAYTG. Residues 276 to 289 show a composition bias toward basic residues; that stretch reads PRKRRLPHTWHNKN.

The protein belongs to the aldo/keto reductase family. Aldo/keto reductase 2 subfamily. As to expression, leaves and roots.

The sequence is that of IN2-2 protein (IN2-2) from Zea mays (Maize).